Reading from the N-terminus, the 142-residue chain is Large-conductance mechanosensitive channel (142 aa).

Helical transmembrane passes span 14–34 (VVDLAVGVIIGAAFGAIVNSL), 38–58 (VIMPIIGAITGGLDFSNYYIP), and 82–102 (GQFLTLAVNFTIIAFVLFMVI).

This sequence belongs to the MscL family. Homopentamer.

The protein resides in the cell inner membrane. In terms of biological role, channel that opens in response to stretch forces in the membrane lipid bilayer. May participate in the regulation of osmotic pressure changes within the cell. The protein is Large-conductance mechanosensitive channel of Methylorubrum populi (strain ATCC BAA-705 / NCIMB 13946 / BJ001) (Methylobacterium populi).